A 114-amino-acid chain; its full sequence is T cell receptor beta variable 3-1 (114 aa).

Positions 1 to 21 (MGCRLLCCVVFCLLQAGPLDT) are cleaved as a signal peptide. Residues 22 to 114 (AVSQTPKYLV…SAVYFCASSQ (93 aa)) enclose the Ig-like domain. Cysteine 42 and cysteine 110 form a disulfide bridge. Asparagine 76 carries an N-linked (GlcNAc...) asparagine glycan.

As to quaternary structure, alpha-beta TR is a heterodimer composed of an alpha and beta chain; disulfide-linked. The alpha-beta TR is associated with the transmembrane signaling CD3 coreceptor proteins to form the TR-CD3 (TcR or TCR). The assembly of alpha-beta TR heterodimers with CD3 occurs in the endoplasmic reticulum where a single alpha-beta TR heterodimer associates with one CD3D-CD3E heterodimer, one CD3G-CD3E heterodimer and one CD247 homodimer forming a stable octameric structure. CD3D-CD3E and CD3G-CD3E heterodimers preferentially associate with TR alpha and TR beta chains, respectively. The association of the CD247 homodimer is the last step of TcR assembly in the endoplasmic reticulum and is required for transport to the cell surface.

Its subcellular location is the cell membrane. In terms of biological role, v region of the variable domain of T cell receptor (TR) beta chain that participates in the antigen recognition. Alpha-beta T cell receptors are antigen specific receptors which are essential to the immune response and are present on the cell surface of T lymphocytes. Recognize peptide-major histocompatibility (MH) (pMH) complexes that are displayed by antigen presenting cells (APC), a prerequisite for efficient T cell adaptive immunity against pathogens. Binding of alpha-beta TR to pMH complex initiates TR-CD3 clustering on the cell surface and intracellular activation of LCK that phosphorylates the ITAM motifs of CD3G, CD3D, CD3E and CD247 enabling the recruitment of ZAP70. In turn ZAP70 phosphorylates LAT, which recruits numerous signaling molecules to form the LAT signalosome. The LAT signalosome propagates signal branching to three major signaling pathways, the calcium, the mitogen-activated protein kinase (MAPK) kinase and the nuclear factor NF-kappa-B (NF-kB) pathways, leading to the mobilization of transcription factors that are critical for gene expression and essential for T cell growth and differentiation. The T cell repertoire is generated in the thymus, by V-(D)-J rearrangement. This repertoire is then shaped by intrathymic selection events to generate a peripheral T cell pool of self-MH restricted, non-autoaggressive T cells. Post-thymic interaction of alpha-beta TR with the pMH complexes shapes TR structural and functional avidity. This is T cell receptor beta variable 3-1 from Homo sapiens (Human).